Reading from the N-terminus, the 318-residue chain is BRISC and BRCA1-A complex member 1 (318 aa).

The segment at Met1–Pro67 is disordered. A compositionally biased stretch (basic and acidic residues) spans Glu9–Pro18. The VWFA-like stretch occupies residues Val86–Leu287.

It belongs to the BABAM1 family. Component of the ARISC complex, at least composed of uimc1/rap80, abraxas1, brcc3/brcc36, BABAM2 and babam1/nba1. Component of the BRCA1-A complex, at least composed of brca1, bard1, uimc1/rap80, abraxas1, brcc3/brcc36, BABAM2 and babam1/nba1. In the BRCA1-A complex, interacts directly with abraxas1 and BABAM2. Component of the BRISC complex, at least composed of abraxas2, brcc3/brcc36, babam2 and babam1/nba1.

It localises to the cytoplasm. It is found in the nucleus. Functionally, component of the BRCA1-A complex, a complex that specifically recognizes 'Lys-63'-linked ubiquitinated histones H2A and H2AX at DNA lesions sites, leading to target the BRCA1-BARD1 heterodimer to sites of DNA damage at double-strand breaks (DSBs). The BRCA1-A complex also possesses deubiquitinase activity that specifically removes 'Lys-63'-linked ubiquitin on histones H2A and H2AX. In the BRCA1-A complex, it is required for the complex integrity and its localization at DSBs. Component of the BRISC complex, a multiprotein complex that specifically cleaves 'Lys-63'-linked ubiquitin in various substrates. In these 2 complexes, it is probably required to maintain the stability of BABAM2 and help the 'Lys-63'-linked deubiquitinase activity mediated by brcc3/brcc36 component. The BRISC complex is required for normal mitotic spindle assembly and microtubule attachment to kinetochores via its role in deubiquitinating numa1. Plays a role in interferon signaling via its role in the deubiquitination of the interferon receptor ifnar1; deubiquitination increases ifnar1 activity by enhancing its stability and cell surface expression. Down-regulates the response to bacterial lipopolysaccharide (LPS) via its role in ifnar1 deubiquitination. In Xenopus tropicalis (Western clawed frog), this protein is BRISC and BRCA1-A complex member 1 (babam1).